We begin with the raw amino-acid sequence, 1383 residues long: MKQLLIFCLLFGSIFHHGDAGCIMRGLCQKHTENAYGPCVTNDTNVEPTAFDKTHPAYEKMVEFCPHLLTGDNKLCCTPSQAEGLTKQIAQARHILGRCPSCFDNFAKLWCEFTCSPNQQDFVSISEMKPIEKKEGFTPEYQPAEAYVNTVEYRLSTDFAEGMFSSCKDVTFGGQPALRVMCTSTPCTLTNWLEFIGTQNLDLNIPIHTKFLLYDPIKTPPSDRSTYMNVNFTGCDKSARVGWPACSTSECNKEEYANLIDLDDGKTSGQTCNVHGIACLNIFVMLAFIGSLAVLLCVGFVFTSYDEDYTNLRQTQSGEESPKRNRIKRTGAWIHNFMENNARDIGMMAGRNPKSHFFIGCAVLIFCLPGMIYHKESTNVVDMWSSPRSRARQEEMVFNANFGRPQRYQQIMLLSHRDFQSSGKLYGPVFHKDIFEELFDILNAIKNISTQDSDGRTITLDDVCYRPMGPGYDCLIMSPTNYFQGNKEHLDMKSNKEETVSEDDDAFDYFSSEATTDEWMNHMAACIDQPMSQKTKSGLSCMGTYGGPSAPNMVFGKNSTNHQAANSIMMTILVTQRTEPEIQKAELWEKEFLKFCKEYREKSPKVIFSFMAERSITDEIENDAKDEIVTVVIALAFLIGYVTFSLGRYFVCENQLWSILVHSRICLGMLSVIINLLSSFCSWGIFSMFGIHPVKNALVVQFFVVTLLGVCRTFMVVKYYAQQRVSMPYMSPDQCPEIVGMVMAGTMPAMFSSSLGCAFSFFIGGFTDLPAIRTFCLYAGLAVLIDVVLHCTIFLALFVWDTQRELNGKPEFFFPYQIKDLLGAYLIGRQRATDTFMTQFFHFQVAPFLMHRMTRIITGIIFIASFITTVILSSKISVGFDQSMAFTEKSYISTHFRYLDKFFDVGPPVFFTVDGELDWHRPDVQNKFCTFPGCSDTSFGNIMNYAVGHTEQTYLSGEMYNWIDNYLEWISRKSPCCKVYVHDPNTFCSTNRNKSALDDKACRTCMDFDYVANSYPKSSIMYHRPSIEVFYRHLRHFLEDTPNSECVFGGRASFKDAISFTSRGRIQASQFMTFHKKLSISNSSDFIKAMDTARMVSRRLERSIDDTAHVFAYSKIFPFYEQYSTIMPILTTQLFITVVGVFGIICVTLGIDVKGAACAVICQVSNYFHIVAFMYIFNIPVNALSATNLVMSSGILIEFSVNVLKGYACSLRQRAKDRAESTVGSIGPIILSGPVVTMAGSTMFLSGAHLQIITVYFFKLFLITIVSSAVHALIILPILLAFGGSRGHGSSETSTNDNDEQHDACVLSPTAESHISNVEEGILNRPSLLDASHILDPLLKAEGGIDKAIDIITIDRSYPSTPSSLPCTSRMPRAHIEPDLRSL.

The N-terminal stretch at 1 to 20 (MKQLLIFCLLFGSIFHHGDA) is a signal peptide. 8 disulfide bridges follow: C22-C76, C28-C39, C65-C111, C77-C115, C99-C246, C102-C167, C182-C187, and C235-C251. N-linked (GlcNAc...) asparagine glycosylation occurs at N42. An N-linked (GlcNAc...) asparagine glycan is attached at N231. Helical transmembrane passes span 282–302 (IFVMLAFIGSLAVLLCVGFVF) and 353–373 (PKSHFFIGCAVLIFCLPGMIY). Residue N447 is glycosylated (N-linked (GlcNAc...) asparagine). 2 disulfide bridges follow: C464–C474 and C526–C541. N558 carries an N-linked (GlcNAc...) asparagine glycan. 6 helical membrane passes run 627–647 (EIVTVVIALAFLIGYVTFSLG), 665–685 (ICLGMLSVIINLLSSFCSWGI), 697–717 (ALVVQFFVVTLLGVCRTFMVV), 746–766 (TMPAMFSSSLGCAFSFFIGGF), 780–800 (GLAVLIDVVLHCTIFLALFVW), and 856–876 (IITGIIFIASFITTVILSSKI). One can recognise an SSD domain in the interval 627 to 800 (EIVTVVIALA…CTIFLALFVW (174 aa)). Disulfide bonds link C929/C934, C976/C1046, C977/C1005, and C988/C1002. 2 N-linked (GlcNAc...) asparagine glycosylation sites follow: N993 and N1082. Helical transmembrane passes span 1126 to 1146 (IMPILTTQLFITVVGVFGIIC), 1157 to 1177 (ACAVICQVSNYFHIVAFMYIF), 1179 to 1199 (IPVNALSATNLVMSSGILIEF), 1226 to 1246 (IGPIILSGPVVTMAGSTMFLS), and 1260 to 1280 (LFLITIVSSAVHALIILPILL).

This sequence belongs to the patched family.

It is found in the membrane. It carries out the reaction cholesterol(in) = cholesterol(out). Involved in the uptake or utilization of cholesterol. Ncr-1 and ncr-2 act redundantly to prevent dauer larva formation under favorable growth conditions, and are required for the normal functioning of ADF, ASI and ASG neurons. The polypeptide is NPC intracellular cholesterol transporter 1 homolog 1 (Caenorhabditis elegans).